The following is a 242-amino-acid chain: Carboxy-S-adenosyl-L-methionine synthase (242 aa).

S-adenosyl-L-methionine-binding positions include Y39, 64–66 (GCS), 89–90 (DN), 117–118 (DI), N132, and R199.

The protein belongs to the class I-like SAM-binding methyltransferase superfamily. Cx-SAM synthase family. As to quaternary structure, homodimer.

It catalyses the reaction prephenate + S-adenosyl-L-methionine = carboxy-S-adenosyl-L-methionine + 3-phenylpyruvate + H2O. In terms of biological role, catalyzes the conversion of S-adenosyl-L-methionine (SAM) to carboxy-S-adenosyl-L-methionine (Cx-SAM). The sequence is that of Carboxy-S-adenosyl-L-methionine synthase from Aliivibrio salmonicida (strain LFI1238) (Vibrio salmonicida (strain LFI1238)).